The chain runs to 56 residues: Large ribosomal subunit protein bL32 (56 aa).

The span at methionine 1 to tryptophan 20 shows a compositional bias: basic residues. Residues methionine 1–lysine 21 form a disordered region.

Belongs to the bacterial ribosomal protein bL32 family.

This chain is Large ribosomal subunit protein bL32, found in Prochlorococcus marinus (strain MIT 9312).